The primary structure comprises 474 residues: Probable periplasmic serine endoprotease DegP-like (474 aa).

An N-terminal signal peptide occupies residues 1–26; sequence MTRMTRHLALWMLLSLAILASQSAMA. Residues H116, D146, and S219 each act as charge relay system in the active site. Substrate contacts are provided by residues 217–219 and 274–278; these read GNS and LGVMI. PDZ domains lie at 263-354 and 360-462; these read LRND…LRNG and TVTV…YRSG.

It belongs to the peptidase S1C family.

Its subcellular location is the periplasm. It carries out the reaction Acts on substrates that are at least partially unfolded. The cleavage site P1 residue is normally between a pair of hydrophobic residues, such as Val-|-Val.. Its function is as follows. Might be efficient in the degradation of transiently denatured and unfolded proteins which accumulate in the periplasm following stress conditions. In Halomonas elongata (strain ATCC 33173 / DSM 2581 / NBRC 15536 / NCIMB 2198 / 1H9), this protein is Probable periplasmic serine endoprotease DegP-like (mucD).